Reading from the N-terminus, the 425-residue chain is NAC domain-containing protein 10 (425 aa).

Residues 1–10 (MESPDSSSGS) show a composition bias toward polar residues. Residues 1–34 (MESPDSSSGSAPPRVLRRQQQQPGSAPELPPGFR) are disordered. A compositionally biased stretch (low complexity) spans 12–23 (PPRVLRRQQQQP). The NAC domain maps to 29 to 200 (LPPGFRFHPT…DWVLCRIYKK (172 aa)). A DNA-binding region spans residues 129–206 (VGVKKALVFY…IYKKTNKAGA (78 aa)).

In terms of tissue distribution, highest expression in stamens. Expressed in leaves.

The protein resides in the nucleus. Its function is as follows. Transcription factor of the NAC family associated with male fertility. Involved in anther development, but not in senescence. Reduced expression of NAC5 via RNAi leads to male-sterility. This Oryza sativa subsp. japonica (Rice) protein is NAC domain-containing protein 10.